The sequence spans 87 residues: Phosphoribosyl-ATP pyrophosphatase (87 aa).

This sequence belongs to the PRA-PH family.

It localises to the cytoplasm. The catalysed reaction is 1-(5-phospho-beta-D-ribosyl)-ATP + H2O = 1-(5-phospho-beta-D-ribosyl)-5'-AMP + diphosphate + H(+). It participates in amino-acid biosynthesis; L-histidine biosynthesis; L-histidine from 5-phospho-alpha-D-ribose 1-diphosphate: step 2/9. The polypeptide is Phosphoribosyl-ATP pyrophosphatase (Paenarthrobacter aurescens (strain TC1)).